Reading from the N-terminus, the 445-residue chain is Cytochrome b (445 aa).

Topologically, residues 2–49 (SGIPHDHYEPRTGIEKWLHSRLPIVALAYDTIMIPTPRNLNWMWIWGV) are cytoplasmic. A helical transmembrane segment spans residues 50 to 67 (VLAFCLVLQIVTGIVLAM). The Periplasmic segment spans residues 68-94 (HYTPHVDLAFASVEHIMRNVNGGFMLR). Residues 95 to 113 (YLHANGASLFFIAVYLHIF) form a helical membrane-spanning segment. Heme b is bound by residues histidine 97 and histidine 111. The Cytoplasmic segment spans residues 114 to 129 (RGLYYGSYKAPREVTW). Residues 130 to 149 (IVGMLIYLAMMATAFMGYVL) traverse the membrane as a helical segment. Over 150-193 (PWGQMSFWGATVITGLFGAIPGIGHSIQTWLLGGPAVDNATLNR) the chain is Periplasmic. The chain crosses the membrane as a helical span at residues 194 to 216 (FFSLHYLLPFVIAALVAIHIWAF). Histidine 198 and histidine 212 together coordinate heme b. Residues 217 to 252 (HSTGNNNPTGVEVRRTSKAEAQKDTVPFWPYFIIKD) lie on the Cytoplasmic side of the membrane. Residues 253-270 (VFALAVVLLVFFAIVGFM) form a helical membrane-spanning segment. Topologically, residues 271–329 (PNYLGHPDNYIEANPLSTPAHIVPEWYFLPFYAILRAFTADVWVVQIANFISFGIIDAK) are periplasmic. Residues 330–346 (FFGVLAMFGAILVMALV) form a helical membrane-spanning segment. Over 347–364 (PWLDTSPVRSGRYRPMFK) the chain is Cytoplasmic. Residues 365-382 (IYFWLLAADFVILTWVGA) traverse the membrane as a helical segment. Residues 383–388 (QQTTFP) lie on the Periplasmic side of the membrane. A helical transmembrane segment spans residues 389–408 (YDWISLIASAYWFAYFLVIL). Topologically, residues 409–445 (PILGAIEKPVAPPATIEEDFNAHYSPATGGTKTVVAE) are cytoplasmic.

This sequence belongs to the cytochrome b family. In terms of assembly, the main subunits of complex b-c1 are: cytochrome b, cytochrome c1 and the Rieske protein. Requires heme b as cofactor.

It localises to the cell membrane. Functionally, component of the ubiquinol-cytochrome c reductase complex (complex III or cytochrome b-c1 complex), which is a respiratory chain that generates an electrochemical potential coupled to ATP synthesis. The chain is Cytochrome b (petB) from Cereibacter sphaeroides (Rhodobacter sphaeroides).